A 1004-amino-acid chain; its full sequence is Liprin-beta homolog (1004 aa).

2 stretches are compositionally biased toward low complexity: residues 50–63 and 149–161; these read NGNS…TIGS and SPPS…SSSL. Disordered stretches follow at residues 50-122 and 135-161; these read NGNS…RSSR and HRTD…SSSL. Coiled-coil stretches lie at residues 280 to 328 and 364 to 396; these read CQEL…VNQS and DEMS…ALDE. Disordered stretches follow at residues 341–366, 432–497, 528–550, and 648–686; these read HTNG…DDEM, PSDS…GGNQ, NGNE…GKAS, and FSKL…LGTV. Polar residues predominate over residues 434–453; the sequence is DSMSHSTSFPVSLSSTTSNG. Low complexity predominate over residues 458-474; it reads STVQSSSSYNSSLSAVS. Composition is skewed to polar residues over residues 531–541 and 648–684; these read EGANHNYSSAS and FSKL…NHLG. 3 consecutive SAM domains span residues 698 to 762, 770 to 833, and 858 to 930; these read WRSE…IEED, WDVH…LKKA, and VVRW…LLGP.

The protein belongs to the liprin family. Liprin-beta subfamily. Expressed in pharyngeal muscle, particularly posterior bulb, adjacent to the dorsal and ventral cord (but not in ventral cord neurons), and in body wall muscles.

Its function is as follows. Involved in the regulation of synaptic function at neuromuscular junctions. Together with the liprin-alpha protein syd-2, may play a role in regulating the structure of the neuronal region, called the active zone, from which synaptic vesicles send neurotransmitter signals across the synapse. Does not seem to be required for neuronal development. May regulate the disassembly of focal adhesions. Does not bind receptor-like tyrosine phosphatases type 2A. In Caenorhabditis elegans, this protein is Liprin-beta homolog.